The primary structure comprises 681 residues: Potassium-transporting ATPase ATP-binding subunit 1 (681 aa).

4 consecutive transmembrane segments (helical) span residues 30–50, 59–79, 216–236, and 255–275; these read LLVY…FFGI, LAIA…EAIA, ILLV…LPFT, and IALL…SIGI. The 4-aspartylphosphate intermediate role is filled by aspartate 306. ATP contacts are provided by residues aspartate 343, glutamate 347, 376 to 383, and lysine 394; that span reads FTATTRMS. Positions 517 and 521 each coordinate Mg(2+). 3 consecutive transmembrane segments (helical) span residues 587-607, 615-635, and 661-681; these read FAII…LNLM, AILS…PLSL, and LIAP…LGIV.

This sequence belongs to the cation transport ATPase (P-type) (TC 3.A.3) family. Type IA subfamily. The system is composed of three essential subunits: KdpA, KdpB and KdpC.

It is found in the cell membrane. The catalysed reaction is K(+)(out) + ATP + H2O = K(+)(in) + ADP + phosphate + H(+). Functionally, part of the high-affinity ATP-driven potassium transport (or Kdp) system, which catalyzes the hydrolysis of ATP coupled with the electrogenic transport of potassium into the cytoplasm. This subunit is responsible for energy coupling to the transport system and for the release of the potassium ions to the cytoplasm. The sequence is that of Potassium-transporting ATPase ATP-binding subunit 1 from Listeria innocua serovar 6a (strain ATCC BAA-680 / CLIP 11262).